Here is a 409-residue protein sequence, read N- to C-terminus: MQAPAGLAVKAPLIANSDLMSGKPSLIGLTREEMGEALAEIGVPQKQVKMRVSQLWNWLYVRGVSDFDNMTNVAKELREKLKAAFTIARPEIVEEQISNDGTRKWLMRFPPRGAGRPVEIETVYIPEEGRGTLCISSQVGCSLTCSFCHTGTQRLVRNLTAEEILSQLLLARDRLGDFPDGSTPVGAYVPSEGRKVSNIVMMGMGEPLYNFEHVKTALLIATDGDGLSLSKRRVTLSTSGVVPEIFRTGDEIGVMLAISLHAVRDDLRDMLVPINKKYPLKELIEACRNYPGVSNARRITFEYVMLKDVNDSLEDAKMLVQLLKGVPAKINLIPFNPWPGTNYQCSEWAQIEKFADFINQAGYASPIRTPRGRDILAACGQLKSESERMRKTERLAFEAMMIANHGADD.

E121 serves as the catalytic Proton acceptor. Residues 127–376 (EEGRGTLCIS…IRTPRGRDIL (250 aa)) form the Radical SAM core domain. C134 and C379 are oxidised to a cystine. [4Fe-4S] cluster is bound by residues C141, C145, and C148. S-adenosyl-L-methionine-binding positions include 205–206 (GE), S237, 259–261 (SLH), and N336. C379 acts as the S-methylcysteine intermediate in catalysis.

This sequence belongs to the radical SAM superfamily. RlmN family. [4Fe-4S] cluster is required as a cofactor.

Its subcellular location is the cytoplasm. It catalyses the reaction adenosine(2503) in 23S rRNA + 2 reduced [2Fe-2S]-[ferredoxin] + 2 S-adenosyl-L-methionine = 2-methyladenosine(2503) in 23S rRNA + 5'-deoxyadenosine + L-methionine + 2 oxidized [2Fe-2S]-[ferredoxin] + S-adenosyl-L-homocysteine. The enzyme catalyses adenosine(37) in tRNA + 2 reduced [2Fe-2S]-[ferredoxin] + 2 S-adenosyl-L-methionine = 2-methyladenosine(37) in tRNA + 5'-deoxyadenosine + L-methionine + 2 oxidized [2Fe-2S]-[ferredoxin] + S-adenosyl-L-homocysteine. Specifically methylates position 2 of adenine 2503 in 23S rRNA and position 2 of adenine 37 in tRNAs. m2A2503 modification seems to play a crucial role in the proofreading step occurring at the peptidyl transferase center and thus would serve to optimize ribosomal fidelity. The protein is Dual-specificity RNA methyltransferase RlmN of Agrobacterium fabrum (strain C58 / ATCC 33970) (Agrobacterium tumefaciens (strain C58)).